A 337-amino-acid polypeptide reads, in one-letter code: Cytoskeleton protein RodZ (337 aa).

Topologically, residues 1–111 (MNTEATHDQN…LGKRRKKRDG (111 aa)) are cytoplasmic. The HTH cro/C1-type domain maps to 19-71 (LRNAREQLGLSQQAVAERLCLKVSTVRDIEEDKAPADLASTFLRGYIRSYARL). Residues 30 to 49 (QQAVAERLCLKVSTVRDIEE) constitute a DNA-binding region (H-T-H motif). The helical; Signal-anchor for type II membrane protein transmembrane segment at 112-132 (WLMTFTWLVLFVVIGLSGAWW) threads the bilayer. Topologically, residues 133–337 (WQDHKAQQEE…TLNAEQSPAQ (205 aa)) are periplasmic. Positions 145–167 (TMADQSSAELSSNSEQGQSVPLN) are enriched in polar residues. Positions 145-236 (TMADQSSAEL…TAATTPDGAA (92 aa)) are disordered. The segment covering 168-207 (TSTTTDPATTSTPPASVDTTATNTQTPVVTAPAPAVDPQQ) has biased composition (low complexity). The segment covering 208–218 (NAVVSPSQANV) has biased composition (polar residues). A compositionally biased stretch (low complexity) spans 219–236 (DTAATPAPTAATTPDGAA).

It belongs to the RodZ family.

The protein localises to the cell inner membrane. Cytoskeletal protein that is involved in cell-shape control through regulation of the length of the long axis. The polypeptide is Cytoskeleton protein RodZ (Escherichia coli O157:H7).